We begin with the raw amino-acid sequence, 405 residues long: Glucose-1-phosphate adenylyltransferase (405 aa).

Alpha-D-glucose 1-phosphate is bound by residues Tyr96, Gly161, 176–177, and Ser194; that span reads EK.

The protein belongs to the bacterial/plant glucose-1-phosphate adenylyltransferase family. In terms of assembly, homotetramer.

It carries out the reaction alpha-D-glucose 1-phosphate + ATP + H(+) = ADP-alpha-D-glucose + diphosphate. The protein operates within glycan biosynthesis; glycogen biosynthesis. Involved in the biosynthesis of ADP-glucose, a building block required for the elongation reactions to produce glycogen. Catalyzes the reaction between ATP and alpha-D-glucose 1-phosphate (G1P) to produce pyrophosphate and ADP-Glc. The chain is Glucose-1-phosphate adenylyltransferase from Photobacterium profundum (strain SS9).